The primary structure comprises 474 residues: Aspartyl/glutamyl-tRNA(Asn/Gln) amidotransferase subunit B (474 aa).

This sequence belongs to the GatB/GatE family. GatB subfamily. In terms of assembly, heterotrimer of A, B and C subunits.

The catalysed reaction is L-glutamyl-tRNA(Gln) + L-glutamine + ATP + H2O = L-glutaminyl-tRNA(Gln) + L-glutamate + ADP + phosphate + H(+). It carries out the reaction L-aspartyl-tRNA(Asn) + L-glutamine + ATP + H2O = L-asparaginyl-tRNA(Asn) + L-glutamate + ADP + phosphate + 2 H(+). Allows the formation of correctly charged Asn-tRNA(Asn) or Gln-tRNA(Gln) through the transamidation of misacylated Asp-tRNA(Asn) or Glu-tRNA(Gln) in organisms which lack either or both of asparaginyl-tRNA or glutaminyl-tRNA synthetases. The reaction takes place in the presence of glutamine and ATP through an activated phospho-Asp-tRNA(Asn) or phospho-Glu-tRNA(Gln). The sequence is that of Aspartyl/glutamyl-tRNA(Asn/Gln) amidotransferase subunit B from Persephonella marina (strain DSM 14350 / EX-H1).